The following is a 421-amino-acid chain: Exopolysaccharide production protein ExoF (421 aa).

Positions 1 to 31 (MQSNRRSGKSAGSRMVSCFTRLALLAALAAS) are cleaved as a signal peptide.

The protein localises to the periplasm. The protein operates within glycan metabolism; exopolysaccharide biosynthesis. Functionally, involved in succinoglycan (EPS I) synthesis. Needed for the addition of the first sugar (galactose) to the isoprenoid carrier. The chain is Exopolysaccharide production protein ExoF (exoF) from Rhizobium meliloti (strain 1021) (Ensifer meliloti).